An 86-amino-acid polypeptide reads, in one-letter code: Curamycin polyketide synthase acyl carrier protein (86 aa).

The region spanning 7–86 is the Carrier domain; that stretch reads QVTVEELATL…VVNGALASGA (80 aa). Ser-44 carries the O-(pantetheine 4'-phosphoryl)serine modification.

Post-translationally, 4'-phosphopantetheine is transferred from CoA to a specific serine of the apo-ACP-like protein.

Its pathway is antibiotic biosynthesis; curamycin biosynthesis. Functionally, acyl carrier protein. The polypeptide is Curamycin polyketide synthase acyl carrier protein (curE) (Streptomyces cyaneus (Streptomyces curacoi)).